Here is a 193-residue protein sequence, read N- to C-terminus: Bcl-2-binding component 3, isoforms 1/2 (193 aa).

Disordered regions lie at residues 1-28 (MARARQEGSSPEPVEGLARDGPRPFPLG) and 71-138 (ALGG…REIG). Residue S10 is modified to Phosphoserine. Low complexity predominate over residues 71–82 (ALGGSRWPGGPR). The BH3 motif lies at 137–151 (IGAQLRRMADDLNAQ).

This sequence belongs to the Bcl-2 family. In terms of assembly, interacts with MCL1 and BCL2A1. Interacts (via BH3 domain) with BCL2. Interacts with BCL2L1/BCL-XL. Interacts (via BH3 domain) with NOL3/ARC (via CARD domain); this interaction prevents BBC3 association with BCL2 and results in CASP8 activation. In terms of tissue distribution, ubiquitously expressed.

It localises to the mitochondrion. Its function is as follows. Essential mediator of p53/TP53-dependent and p53/TP53-independent apoptosis. Promotes partial unfolding of BCL2L1 and dissociation of BCL2L1 from p53/TP53, releasing the bound p53/TP53 to induce apoptosis. Regulates ER stress-induced neuronal apoptosis. This chain is Bcl-2-binding component 3, isoforms 1/2 (BBC3), found in Homo sapiens (Human).